The sequence spans 137 residues: Glutamate mutase sigma subunit (137 aa).

One can recognise a B12-binding domain in the interval 3–137; the sequence is KKTIVLGVIG…ADLKKDLNIE (135 aa). Residues 13–17, histidine 16, 61–63, and 93–97 each bind adenosylcob(III)alamin; these read SDCHA, SSL, and NIVVG.

Belongs to the methylaspartate mutase GlmS subunit family. Heterotetramer composed of 2 epsilon subunits (GlmE) and 2 sigma subunits (GlmS). GlmE exists as a homodimer and GlmS as a monomer. It depends on adenosylcob(III)alamin as a cofactor.

It carries out the reaction (2S,3S)-3-methyl-L-aspartate = L-glutamate. It functions in the pathway amino-acid degradation; L-glutamate degradation via mesaconate pathway; acetate and pyruvate from L-glutamate: step 1/4. With respect to regulation, competitively inhibited by (2S,4S)-4-fluoroglutamate, 2-methyleneglutarate, (2R,3RS)-3-fluoroglutamate and (S)-3-methylitaconate. In terms of biological role, catalyzes the carbon skeleton rearrangement of L-glutamate to L-threo-3-methylaspartate ((2S,3S)-3-methylaspartate). The chain is Glutamate mutase sigma subunit from Clostridium cochlearium.